Reading from the N-terminus, the 514-residue chain is 2,3-bisphosphoglycerate-independent phosphoglycerate mutase (514 aa).

Positions 14 and 64 each coordinate Mn(2+). Serine 64 (phosphoserine intermediate) is an active-site residue. Substrate contacts are provided by residues histidine 125, 155-156 (RD), arginine 187, arginine 193, 263-266 (RADR), and lysine 336. Mn(2+) is bound by residues aspartate 403, histidine 407, aspartate 444, histidine 445, and histidine 463.

Belongs to the BPG-independent phosphoglycerate mutase family. In terms of assembly, monomer. Requires Mn(2+) as cofactor.

It catalyses the reaction (2R)-2-phosphoglycerate = (2R)-3-phosphoglycerate. The protein operates within carbohydrate degradation; glycolysis; pyruvate from D-glyceraldehyde 3-phosphate: step 3/5. Its function is as follows. Catalyzes the interconversion of 2-phosphoglycerate and 3-phosphoglycerate. The sequence is that of 2,3-bisphosphoglycerate-independent phosphoglycerate mutase from Salmonella paratyphi A (strain ATCC 9150 / SARB42).